Here is a 247-residue protein sequence, read N- to C-terminus: MITELEMGKGESELELGLGLSLGGGTAAKIGKSGGGGAWGERGRLLTAKDFPSVGSKRAADSASHAGSSPPRSSSQVVGWPPIGSHRMNSLVNNQATKSAREEEEAGKKKVKDDEPKDVTKKVNGKVQVGFIKVNMDGVAIGRKVDLNAHSSYENLAQTLEDMFFRTNPGTVGLTSQFTKPLRLLDGSSEFVLTYEDKEGDWMLVGDVPWRMFINSVKRLRVMKTSEANGLAARNQEPNERQRKQPV.

The EAR-like (transcriptional repression) signature appears at 14-18 (LELGL). The segment covering 25-40 (GTAAKIGKSGGGGAWG) has biased composition (gly residues). 2 disordered regions span residues 25–44 (GTAA…ERGR) and 49–119 (KDFP…PKDV). The span at 62-75 (SASHAGSSPPRSSS) shows a compositional bias: low complexity. Over residues 87–98 (RMNSLVNNQATK) the composition is skewed to polar residues. Residues 106 to 119 (AGKKKVKDDEPKDV) are compositionally biased toward basic and acidic residues. The region spanning 129-225 (VGFIKVNMDG…SVKRLRVMKT (97 aa)) is the PB1 domain.

It belongs to the Aux/IAA family. Homodimers and heterodimers. Interacts with TPL. Preferentially expressed in stems.

The protein resides in the nucleus. Its function is as follows. Aux/IAA proteins are short-lived transcriptional factors that function as repressors of early auxin response genes at low auxin concentrations. Repression is thought to result from the interaction with auxin response factors (ARFs), proteins that bind to the auxin-responsive promoter element (AuxRE). Formation of heterodimers with ARF proteins may alter their ability to modulate early auxin response genes expression. This Arabidopsis thaliana (Mouse-ear cress) protein is Auxin-responsive protein IAA13 (IAA13).